We begin with the raw amino-acid sequence, 497 residues long: MATITLVQQFLGFGQEQEDGGMKTRYLGAMAGSVILLISAFTLSLGRRSKDFTTDQGKRITEIPGDSRMSKFTRSRELSQQGEDAAGTEPYLLQSGPYRELVISQPDQVHDFYQHDSKRHTKPRNLNLGEQFGSFLGPCVGGEYGDHWRTIRKHFEPPFAFHSVALRAPRFRREINDWLQSKAPNLRVNELDSKIDFRFLVFKLLSLHLYEDAFDDRSYWSLLELNDLYDGIITDILNSKYPDSKLFNLFCWSPKKRLREFQVKWRDFHRLVIENARGGGWACPMEVIYRGVDPQKDLTENAFLATMTEILFANVNISAEVFHTIFSNLASNPSIQTALRKEIQEWKSRLDFDLPKYLAKHDTLLNRVLMESMRISPAFWFSMPECTADAKKIGQYNIPAGTPVVIDTRRLNNDAVTWGTTGDVFNPDRFFKLPSQSLRCGFMRYGTGASSGRCLGKNVADAVFKLTMIEVVERFRLESASESQEKGREGDIRLISL.

A helical transmembrane segment spans residues 26-46 (YLGAMAGSVILLISAFTLSLG). The interval 69-90 (MSKFTRSRELSQQGEDAAGTEP) is disordered. Residue cysteine 454 participates in heme binding.

It depends on heme as a cofactor.

Its subcellular location is the membrane. Its pathway is secondary metabolite biosynthesis. Functionally, cytochrome P450 monooxygenase; part of the gene cluster that mediates the biosynthesis of oxopyrrolidines, polyketide-amino acid hybrid compounds with feature structures of tetramic acid. Does not seem to play a role in oxopyrrolidines A and B biosynthesis. May be involved in further modifications of these oxopyrrolidines. In Penicillium oxalicum (strain 114-2 / CGMCC 5302) (Penicillium decumbens), this protein is Cytochrome P450 monooxygenase opdB.